A 173-amino-acid polypeptide reads, in one-letter code: Calcium-binding protein 5 (173 aa).

EF-hand domains lie at 28-63, 82-99, 105-140, and 142-173; these read DEIE…MGYM, GRVD…KLLA, IGVQ…LLGE, and LTPR…MMSR. Aspartate 41, aspartate 43, aspartate 45, and aspartate 52 together coordinate Ca(2+). Ca(2+) is bound by residues aspartate 118, asparagine 120, aspartate 122, glutamate 124, glutamate 129, aspartate 155, asparagine 157, aspartate 159, threonine 161, and glutamate 166.

Interacts with CACNA1C (via C-terminal CDB motif) in a calcium-dependent manner. Interacts with STXBP1. Interacts with MYO6. In terms of tissue distribution, retina.

It is found in the cytoplasm. Functionally, inhibits calcium-dependent inactivation of L-type calcium channel and shifts voltage dependence of activation to more depolarized membrane potentials. Involved in the transmission of light signals. May positively regulate neurotransmitter vesicle endocytosis and exocytosis in a salt-dependent manner. May play a role in the extension and network organization of neurites. The chain is Calcium-binding protein 5 (CABP5) from Homo sapiens (Human).